Here is a 282-residue protein sequence, read N- to C-terminus: Energy-coupling factor transporter ATP-binding protein EcfA1 (282 aa).

Residues 6–243 (VTVKHLSFTY…EVLIKSAGLE (238 aa)) enclose the ABC transporter domain. 40–47 (GHNGSGKS) contacts ATP.

It belongs to the ABC transporter superfamily. Energy-coupling factor EcfA family. Forms a stable energy-coupling factor (ECF) transporter complex composed of 2 membrane-embedded substrate-binding proteins (S component), 2 ATP-binding proteins (A component) and 2 transmembrane proteins (T component).

It localises to the cell membrane. In terms of biological role, ATP-binding (A) component of a common energy-coupling factor (ECF) ABC-transporter complex. Unlike classic ABC transporters this ECF transporter provides the energy necessary to transport a number of different substrates. This chain is Energy-coupling factor transporter ATP-binding protein EcfA1, found in Lactobacillus johnsonii (strain CNCM I-12250 / La1 / NCC 533).